The primary structure comprises 561 residues: Embryonal Fyn-associated substrate (561 aa).

Residues 5–68 (TSTQLARALY…PANRVKLLPA (64 aa)) enclose the SH3 domain. 4 disordered regions span residues 68–123 (AGPA…CPPS), 171–215 (HPLT…PGPP), 240–372 (LADG…HNEY), and 390–422 (DKAQ…ALSP). Positions 103 to 123 (VPPPARPCPTSGPPAGPCPPS) are enriched in pro residues. A Phosphotyrosine; by SRC modification is found at Y253. Short sequence motifs (SH3-binding) lie at residues 305–311 (RPLPALP) and 335–341 (RPLPPPP). Positions 308 to 325 (PALPVPEAPSPSPVPSPA) are enriched in pro residues. The span at 352 to 372 (VEGDPEGREMEDDPAGHHNEY) shows a compositional bias: basic and acidic residues. A divergent helix-loop-helix motif region spans residues 438 to 488 (FYAGQCQSHYSALQAAVAALMSSTQANQPPRLFVPHSKRVVVAAHRLVFVG).

This sequence belongs to the CAS family. Post-translationally, phosphorylated on multiple tyrosine residues. Phosphorylated on tyrosines by FYN and SRC. As to expression, the protein has been detected in lung and placenta.

Its function is as follows. Docking protein which plays a central coordinating role for tyrosine-kinase-based signaling related to cell adhesion. May serve as an activator of SRC and a downstream effector. Interacts with the SH3 domain of FYN and with CRK, SRC, and YES. In Homo sapiens (Human), this protein is Embryonal Fyn-associated substrate (EFS).